The chain runs to 612 residues: Probable Xaa-Pro aminopeptidase P (612 aa).

Residues D409, D420, E518, and E532 each coordinate Mn(2+).

The protein belongs to the peptidase M24B family. The cofactor is Mn(2+).

It carries out the reaction Release of any N-terminal amino acid, including proline, that is linked to proline, even from a dipeptide or tripeptide.. In terms of biological role, catalyzes the removal of a penultimate prolyl residue from the N-termini of peptides. This chain is Probable Xaa-Pro aminopeptidase P (AMPP), found in Verticillium alfalfae (strain VaMs.102 / ATCC MYA-4576 / FGSC 10136) (Verticillium wilt of alfalfa).